We begin with the raw amino-acid sequence, 203 residues long: Ribosomal RNA large subunit methyltransferase E (203 aa).

S-adenosyl-L-methionine-binding residues include G51, W53, D69, D85, and D108. Residue K148 is the Proton acceptor of the active site.

This sequence belongs to the class I-like SAM-binding methyltransferase superfamily. RNA methyltransferase RlmE family.

The protein resides in the cytoplasm. The catalysed reaction is uridine(2552) in 23S rRNA + S-adenosyl-L-methionine = 2'-O-methyluridine(2552) in 23S rRNA + S-adenosyl-L-homocysteine + H(+). In terms of biological role, specifically methylates the uridine in position 2552 of 23S rRNA at the 2'-O position of the ribose in the fully assembled 50S ribosomal subunit. The sequence is that of Ribosomal RNA large subunit methyltransferase E from Methanocorpusculum labreanum (strain ATCC 43576 / DSM 4855 / Z).